The sequence spans 301 residues: HTH-type transcriptional regulator EstR (301 aa).

In terms of domain architecture, HTH lysR-type spans 5 to 62; it reads PSLRQLSYLVTLSETLHFTEAARRSFVTQSTLSGGIMELERLLGGVLVERDRQNVRLT. The segment at residues 22–41 is a DNA-binding region (H-T-H motif); it reads FTEAARRSFVTQSTLSGGIM.

The protein belongs to the LysR transcriptional regulatory family.

Functionally, transcriptional regulator of the esterase operon. The protein is HTH-type transcriptional regulator EstR (estR) of Acinetobacter baylyi (strain ATCC 33305 / BD413 / ADP1).